Consider the following 238-residue polypeptide: uncharacterized protein (238 aa).

The region spanning methionine 1–lysine 68 is the HTH gntR-type domain. The segment at residues glutamate 28–aspartate 47 is a DNA-binding region (H-T-H motif).

This is an uncharacterized protein from Escherichia coli (strain K12).